The sequence spans 272 residues: Protein SSO0103 (272 aa).

It belongs to the CinA family.

The chain is Protein SSO0103 from Saccharolobus solfataricus (strain ATCC 35092 / DSM 1617 / JCM 11322 / P2) (Sulfolobus solfataricus).